Here is a 565-residue protein sequence, read N- to C-terminus: Sensor histidine kinase MtrB (565 aa).

Residues 1–13 are compositionally biased toward basic residues; it reads MMWGSRRRTRSRW. Residues 1–21 form a disordered region; that stretch reads MMWGSRRRTRSRWGRSGPMTR. A run of 2 helical transmembrane segments spans residues 42–62 and 213–233; these read VVAL…FVLT and GTMI…ALLV. An HAMP domain is found at 235–287; that stretch reads RQVVVPVRSASRIAERFAEGHLSERMPVRGEDDMARLAMSFNDMAESLSRQIT. Positions 302–519 constitute a Histidine kinase domain; that stretch reads DVSHELRTPL…CFRLTLPLVR (218 aa). A Phosphohistidine; by autocatalysis modification is found at H305. Positions 524–565 are disordered; sequence TTSPLPMKPIPQPSPSGGQSPSTGPQHAKDRARQREHAERSL. Over residues 538-549 the composition is skewed to low complexity; sequence PSGGQSPSTGPQ. A compositionally biased stretch (basic and acidic residues) spans 550 to 565; sequence HAKDRARQREHAERSL.

The protein localises to the cell membrane. It catalyses the reaction ATP + protein L-histidine = ADP + protein N-phospho-L-histidine.. Functionally, member of the two-component regulatory system MtrA/MtrB. Seems to function as a membrane-associated protein kinase that phosphorylates MtrA in response to environmental signals. The chain is Sensor histidine kinase MtrB (mtrB) from Mycolicibacterium paratuberculosis (strain ATCC BAA-968 / K-10) (Mycobacterium paratuberculosis).